A 606-amino-acid polypeptide reads, in one-letter code: Endo-beta-1,4-xylanase Xyn10C (606 aa).

The signal sequence occupies residues Met1–Ala19. Cys20 carries the N-palmitoyl cysteine lipid modification. Cys20 is lipidated: S-diacylglycerol cysteine. A disordered region spans residues Gly23–Ser64. Over residues Thr29 to Ser64 the composition is skewed to low complexity. The CBM15 domain maps to Gly91–Glu242. A carbohydrate is bound by residues Asn106 and Gln171. Cys183 and Cys200 form a disulfide bridge. Gln217 is a binding site for a carbohydrate. The region spanning Ser245 to Ala596 is the GH10 domain. Substrate-binding positions include Asn296–Lys299, His332, and Asn384. Glu385 functions as the Proton donor in the catalytic mechanism. Catalysis depends on Glu497, which acts as the Nucleophile. Trp552 lines the substrate pocket.

Belongs to the glycosyl hydrolase 10 (cellulase F) family.

The protein localises to the cell outer membrane. The catalysed reaction is Endohydrolysis of (1-&gt;4)-beta-D-xylosidic linkages in xylans.. It functions in the pathway glycan degradation; xylan degradation. Its function is as follows. Endo-acting xylanase which specifically cleaves internal linkages on the xylan backbone, releasing xylooligosaccharides. Is able to hydrolyze oat spelt xylan, the arabinoxylans from wheat and rye, and glucuronoxylan. Also displays very low activity against xylooligosaccharides. During the xylan degradation process, Xyn10C may act on the soluble xylans and long xylooligosaccharides products released by the secreted xylanases Xyn11A, Xyn11B and Xyn10A. This chain is Endo-beta-1,4-xylanase Xyn10C (xyn10C), found in Cellvibrio japonicus (Pseudomonas fluorescens subsp. cellulosa).